Reading from the N-terminus, the 148-residue chain is Sperm-specific protein PHI-2B (148 aa).

The segment covering 1–35 (PSPSRRSRSRSRSRSKSPKRSPAKKARKTPKKRRA) has biased composition (basic residues). 2 disordered regions span residues 1–44 (PSPS…KPST) and 97–148 (GVLV…KSNN). The H15 domain maps to 40–119 (KKPSTLSMIV…GATGSFRVGK (80 aa)). The span at 124-148 (PKKKAKKAKSPKKKSSKKSSNKSNN) shows a compositional bias: basic residues.

The protein belongs to the histone H1/H5 family. Sperm.

It is found in the nucleus. The protein resides in the chromosome. Functionally, linker histones are implicated in chromatin remodeling and/or transcriptional regulation during spermiogenesis, the process of spermatid maturation into spermatozoa. The protein is Sperm-specific protein PHI-2B of Mytilus californianus (California mussel).